A 464-amino-acid chain; its full sequence is Glutamate decarboxylase beta (464 aa).

Position 275 is an N6-(pyridoxal phosphate)lysine (Lys275).

Belongs to the group II decarboxylase family. The cofactor is pyridoxal 5'-phosphate.

The catalysed reaction is L-glutamate + H(+) = 4-aminobutanoate + CO2. In terms of biological role, converts internalized glutamate to GABA and increases the internal pH. Involved in glutamate-dependent acid resistance in gastric fluid. This chain is Glutamate decarboxylase beta (gadB), found in Listeria innocua serovar 6a (strain ATCC BAA-680 / CLIP 11262).